A 227-amino-acid polypeptide reads, in one-letter code: Cytochrome c oxidase subunit 2 (227 aa).

The Mitochondrial intermembrane portion of the chain corresponds to 1 to 14; it reads MAYPFELGFQDATS. The helical transmembrane segment at 15 to 45 threads the bilayer; that stretch reads PIMEELLHFHDHTLMIVFLISSLVLYIISLM. Topologically, residues 46-59 are mitochondrial matrix; it reads LTTKLTHTSTMDAQ. Residues 60-87 form a helical membrane-spanning segment; the sequence is EVETIWTILPAIILILIALPSLRILYMM. Over 88-227 the chain is Mitochondrial intermembrane; that stretch reads DEINDPSLTV…HFENWSSSML (140 aa). Cu cation contacts are provided by histidine 161, cysteine 196, glutamate 198, cysteine 200, histidine 204, and methionine 207. Glutamate 198 is a Mg(2+) binding site.

Belongs to the cytochrome c oxidase subunit 2 family. Component of the cytochrome c oxidase (complex IV, CIV), a multisubunit enzyme composed of 14 subunits. The complex is composed of a catalytic core of 3 subunits MT-CO1, MT-CO2 and MT-CO3, encoded in the mitochondrial DNA, and 11 supernumerary subunits COX4I, COX5A, COX5B, COX6A, COX6B, COX6C, COX7A, COX7B, COX7C, COX8 and NDUFA4, which are encoded in the nuclear genome. The complex exists as a monomer or a dimer and forms supercomplexes (SCs) in the inner mitochondrial membrane with NADH-ubiquinone oxidoreductase (complex I, CI) and ubiquinol-cytochrome c oxidoreductase (cytochrome b-c1 complex, complex III, CIII), resulting in different assemblies (supercomplex SCI(1)III(2)IV(1) and megacomplex MCI(2)III(2)IV(2)). Found in a complex with TMEM177, COA6, COX18, COX20, SCO1 and SCO2. Interacts with TMEM177 in a COX20-dependent manner. Interacts with COX20. Interacts with COX16. It depends on Cu cation as a cofactor.

It localises to the mitochondrion inner membrane. The enzyme catalyses 4 Fe(II)-[cytochrome c] + O2 + 8 H(+)(in) = 4 Fe(III)-[cytochrome c] + 2 H2O + 4 H(+)(out). Component of the cytochrome c oxidase, the last enzyme in the mitochondrial electron transport chain which drives oxidative phosphorylation. The respiratory chain contains 3 multisubunit complexes succinate dehydrogenase (complex II, CII), ubiquinol-cytochrome c oxidoreductase (cytochrome b-c1 complex, complex III, CIII) and cytochrome c oxidase (complex IV, CIV), that cooperate to transfer electrons derived from NADH and succinate to molecular oxygen, creating an electrochemical gradient over the inner membrane that drives transmembrane transport and the ATP synthase. Cytochrome c oxidase is the component of the respiratory chain that catalyzes the reduction of oxygen to water. Electrons originating from reduced cytochrome c in the intermembrane space (IMS) are transferred via the dinuclear copper A center (CU(A)) of subunit 2 and heme A of subunit 1 to the active site in subunit 1, a binuclear center (BNC) formed by heme A3 and copper B (CU(B)). The BNC reduces molecular oxygen to 2 water molecules using 4 electrons from cytochrome c in the IMS and 4 protons from the mitochondrial matrix. The polypeptide is Cytochrome c oxidase subunit 2 (MT-CO2) (Neotamias bulleri (Buller's chipmunk)).